The primary structure comprises 783 residues: BMP/retinoic acid-inducible neural-specific protein 2 (783 aa).

An N-terminal signal peptide occupies residues 1–33 (MRWPCSSRFRGLWPEAAPWAVLLALGVPGWVLA). In terms of domain architecture, MACPF spans 85-281 (RYRIYREFAR…FVAAALSYIT (197 aa)). 6 N-linked (GlcNAc...) asparagine glycosylation sites follow: Asn-185, Asn-354, Asn-473, Asn-579, Asn-626, and Asn-658.

This sequence belongs to the BRINP family. Expressed in olfactory bulb, cerebellum and neuronal layers in hippocampus.

It localises to the secreted. Its function is as follows. Inhibits neuronal cell proliferation by negative regulation of the cell cycle transition. This is BMP/retinoic acid-inducible neural-specific protein 2 (Brinp2) from Rattus norvegicus (Rat).